Here is a 197-residue protein sequence, read N- to C-terminus: Dephospho-CoA kinase (197 aa).

The DPCK domain occupies 2-197; sequence RIGLTGGIAS…YDALAKTAHE (196 aa). Residue 10–15 participates in ATP binding; that stretch reads ASGKSL.

This sequence belongs to the CoaE family.

It is found in the cytoplasm. The enzyme catalyses 3'-dephospho-CoA + ATP = ADP + CoA + H(+). It functions in the pathway cofactor biosynthesis; coenzyme A biosynthesis; CoA from (R)-pantothenate: step 5/5. Catalyzes the phosphorylation of the 3'-hydroxyl group of dephosphocoenzyme A to form coenzyme A. The chain is Dephospho-CoA kinase from Shouchella clausii (strain KSM-K16) (Alkalihalobacillus clausii).